The sequence spans 330 residues: Polyprenol dehydrogenase (330 aa).

The NAD(+) site is built by isoleucine 55, tyrosine 208, lysine 212, and threonine 245. The active-site Proton acceptor is the tyrosine 208.

The protein belongs to the short-chain dehydrogenases/reductases (SDR) family. In terms of tissue distribution, widely expressed. Highly expressed in the pancreas.

Its subcellular location is the lipid droplet. The protein localises to the secreted. The enzyme catalyses a di-trans,poly-cis-polyprenol + NAD(+) = a di-trans,poly-cis-polyprenal + NADH + H(+). It catalyses the reaction a di-trans,poly-cis-polyprenol + NADP(+) = a di-trans,poly-cis-polyprenal + NADPH + H(+). It carries out the reaction a di-trans,poly-cis-dolichol + NADP(+) = a di-trans,poly-cis-dolichal + NADPH + H(+). The catalysed reaction is a di-trans,poly-cis-dolichol + NAD(+) = a di-trans,poly-cis-dolichal + NADH + H(+). The protein operates within protein modification; protein glycosylation. Functionally, oxidoreductase that plays a key role in early steps of protein N-linked glycosylation by mediating two non-consecutive steps in dolichol biosynthesis. Acts both as a NAD(+)-dependent dehydrogenase and as a NADPH-dependent reductase during the conversion of polyprenol into dolichol. First catalyzes the NAD(+)-dependent dehydrogenation of polyprenol into polyprenal; polyprenal is then reduced into dolichal by SRD5A3. It then catalyzes the NADPH-dependent reduction of dolichal into dolichol. May also acts as a positive regulator of starvation-induced autophagy. The protein is Polyprenol dehydrogenase of Homo sapiens (Human).